The sequence spans 89 residues: Putative defensin-like protein 230 (89 aa).

Residues 1-26 (MRSVIWFIVSYTLMLLVLRGGKEVEA) form the signal peptide. 4 disulfide bridges follow: Cys-30-Cys-84, Cys-40-Cys-65, Cys-48-Cys-78, and Cys-63-Cys-80.

It belongs to the DEFL family.

It is found in the secreted. The chain is Putative defensin-like protein 230 (SCRL24) from Arabidopsis thaliana (Mouse-ear cress).